A 130-amino-acid polypeptide reads, in one-letter code: Small ribosomal subunit protein uS8 (130 aa).

Belongs to the universal ribosomal protein uS8 family. Part of the 30S ribosomal subunit.

Functionally, one of the primary rRNA binding proteins, it binds directly to 16S rRNA central domain where it helps coordinate assembly of the platform of the 30S subunit. The polypeptide is Small ribosomal subunit protein uS8 (Korarchaeum cryptofilum (strain OPF8)).